A 271-amino-acid polypeptide reads, in one-letter code: Shikimate kinase (271 aa).

Position 83–93 (83–93) interacts with ATP; that stretch reads PIAMGLKSSSA.

It belongs to the GHMP kinase family. Archaeal shikimate kinase subfamily.

It is found in the cytoplasm. The catalysed reaction is shikimate + ATP = 3-phosphoshikimate + ADP + H(+). It participates in metabolic intermediate biosynthesis; chorismate biosynthesis; chorismate from D-erythrose 4-phosphate and phosphoenolpyruvate: step 5/7. In Thermococcus kodakarensis (strain ATCC BAA-918 / JCM 12380 / KOD1) (Pyrococcus kodakaraensis (strain KOD1)), this protein is Shikimate kinase.